Consider the following 491-residue polypeptide: Cytochrome P450 2F1 (491 aa).

Cys436 contacts heme.

The protein belongs to the cytochrome P450 family. Heme is required as a cofactor. In terms of tissue distribution, expressed in lung. Rarely detected in liver and placenta.

It localises to the endoplasmic reticulum membrane. The protein localises to the microsome membrane. The catalysed reaction is an organic molecule + reduced [NADPH--hemoprotein reductase] + O2 = an alcohol + oxidized [NADPH--hemoprotein reductase] + H2O + H(+). Its function is as follows. May be involved in the metabolism of various pneumotoxicants including naphthalene. Is able to dealkylate ethoxycoumarin, propoxycoumarin, and pentoxyresorufin but possesses no activity toward ethoxyresorufin and only trace dearylation activity toward benzyloxyresorufin. Bioactivates 3-methylindole (3MI) by dehydrogenation to the putative electrophile 3-methylene-indolenine. This is Cytochrome P450 2F1 (CYP2F1) from Homo sapiens (Human).